We begin with the raw amino-acid sequence, 324 residues long: Anthranilate phosphoribosyltransferase (324 aa).

Residues glycine 72, 75–76 (GD), serine 80, 82–85 (NVST), 99–107 (KHGNVSITS), and serine 111 contribute to the 5-phospho-alpha-D-ribose 1-diphosphate site. Glycine 72 is an anthranilate binding site. Serine 84 contributes to the Mg(2+) binding site. Position 102 (asparagine 102) interacts with anthranilate. Arginine 157 contacts anthranilate. Mg(2+) contacts are provided by aspartate 215 and glutamate 216.

This sequence belongs to the anthranilate phosphoribosyltransferase family. Homodimer. Mg(2+) serves as cofactor.

It catalyses the reaction N-(5-phospho-beta-D-ribosyl)anthranilate + diphosphate = 5-phospho-alpha-D-ribose 1-diphosphate + anthranilate. It participates in amino-acid biosynthesis; L-tryptophan biosynthesis; L-tryptophan from chorismate: step 2/5. Functionally, catalyzes the transfer of the phosphoribosyl group of 5-phosphorylribose-1-pyrophosphate (PRPP) to anthranilate to yield N-(5'-phosphoribosyl)-anthranilate (PRA). The sequence is that of Anthranilate phosphoribosyltransferase from Pyrococcus abyssi (strain GE5 / Orsay).